We begin with the raw amino-acid sequence, 41 residues long: Probable cinnamyl alcohol dehydrogenase 2 (41 aa).

This sequence belongs to the zinc-containing alcohol dehydrogenase family. Zn(2+) serves as cofactor.

The catalysed reaction is (E)-cinnamyl alcohol + NADP(+) = (E)-cinnamaldehyde + NADPH + H(+). It carries out the reaction (E)-coniferol + NADP(+) = (E)-coniferaldehyde + NADPH + H(+). It catalyses the reaction (E)-sinapyl alcohol + NADP(+) = (E)-sinapaldehyde + NADPH + H(+). The enzyme catalyses (E)-4-coumaroyl alcohol + NADP(+) = (E)-4-coumaraldehyde + NADPH + H(+). The catalysed reaction is (E)-caffeyl alcohol + NADP(+) = (E)-caffeyl aldehyde + NADPH + H(+). Its pathway is aromatic compound metabolism; phenylpropanoid biosynthesis. In terms of biological role, involved in lignin biosynthesis. Catalyzes the final step specific for the production of lignin monomers, like coniferyl alcohol, sinapyl alcohol and 4-coumaryl alcohol. The polypeptide is Probable cinnamyl alcohol dehydrogenase 2 (Pseudotsuga menziesii (Douglas-fir)).